The chain runs to 548 residues: Synaptic vesicle 2-related protein (548 aa).

The Cytoplasmic segment spans residues 1 to 87 (MEEDLFQLRQ…GFGRFQWKLS (87 aa)). A phosphoserine mark is found at Ser25 and Ser31. A helical transmembrane segment spans residues 88–108 (VLTGLAWMADAMEMMILSILA). Residues 109–122 (PQLHCEWRLPSWQV) lie on the Vesicular side of the membrane. The chain crosses the membrane as a helical span at residues 123 to 143 (ALLTSVVFIGMMSSSTLWGNI). Residues 144 to 156 (SDQYGRKTGLKIS) lie on the Cytoplasmic side of the membrane. Residues 157–177 (VFWTLYYGILSAFAPVYSWIL) traverse the membrane as a helical segment. Residues 178–180 (VLR) lie on the Vesicular side of the membrane. A helical membrane pass occupies residues 181–201 (GLVGFGIGGVPQSVTLYAEFL). The Cytoplasmic portion of the chain corresponds to 202-209 (PMKARAKC). The helical transmembrane segment at 210–230 (ILLIEVFWAIGTVFEVLLAVF) threads the bilayer. The Vesicular segment spans residues 231 to 238 (VMPSLGWR). A helical transmembrane segment spans residues 239-259 (WLLLLSAAPLLVFAVLCFWLP). Topologically, residues 260–316 (ESARYDVLSGNQEKAIATLKRIATENGAPMPLGKLIISRQEDRGKMRDLFTPHFRWT) are cytoplasmic. The helical transmembrane segment at 317–337 (TLLLWFIWFSNAFSYYGLVLL) threads the bilayer. The Vesicular segment spans residues 338-373 (TTELFQAGDVCSISSRKKAVEAKCSLACEYLSKEDY). The helical transmembrane segment at 374–394 (MDLLWTTLSEFPGVLVTLWVI) threads the bilayer. Residues 395 to 401 (DRLGRKK) are Cytoplasmic-facing. A helical membrane pass occupies residues 402–422 (TMALCFVIFSLCSLLLFICIG). Over 423–424 (RN) the chain is Vesicular. Residues 425–445 (VLTLLLFIARAFISGGFQAAY) traverse the membrane as a helical segment. Residues 446-457 (VYTPEVYPTATR) are Cytoplasmic-facing. A helical transmembrane segment spans residues 458–478 (ALGLGTCSGMARVGALITPFI). Residues 479 to 489 (AQVMLESSVYL) lie on the Vesicular side of the membrane. Residues 490 to 510 (TLAVYSGCCLLAALASCFLPI) traverse the membrane as a helical segment. At 511-548 (ETKGRALQESSHREWGQEMVGRGTNSTGVPRSNSGSQE) the chain is on the cytoplasmic side. Positions 523–548 (REWGQEMVGRGTNSTGVPRSNSGSQE) are disordered. The segment covering 533 to 548 (GTNSTGVPRSNSGSQE) has biased composition (polar residues). Ser542 carries the post-translational modification Phosphoserine.

Belongs to the major facilitator superfamily. Detected in brain (at protein level). Detected in brain, in synaptic layers of the cerebellum, hippocampus and cerebral cortex.

Its subcellular location is the cytoplasmic vesicle. The protein localises to the secretory vesicle. The protein resides in the synaptic vesicle membrane. The sequence is that of Synaptic vesicle 2-related protein (Svop) from Rattus norvegicus (Rat).